The chain runs to 204 residues: Recombination protein RecR (204 aa).

The C4-type zinc finger occupies 61-76 (CARCNTFSETQICSTC). The Toprim domain maps to 84–183 (SLLCIVETPA…KVTRIARGIP (100 aa)).

It belongs to the RecR family.

Its function is as follows. May play a role in DNA repair. It seems to be involved in an RecBC-independent recombinational process of DNA repair. It may act with RecF and RecO. The protein is Recombination protein RecR of Polynucleobacter asymbioticus (strain DSM 18221 / CIP 109841 / QLW-P1DMWA-1) (Polynucleobacter necessarius subsp. asymbioticus).